Reading from the N-terminus, the 1117-residue chain is Isoleucine--tRNA ligase (1117 aa).

Residues 64 to 74 (PFANGLPHYGH) carry the 'HIGH' region motif. The 'KMSKS' region signature appears at 647-651 (KLSKR). Lys650 contacts ATP.

The protein belongs to the class-I aminoacyl-tRNA synthetase family. IleS type 2 subfamily. In terms of assembly, monomer. Zn(2+) serves as cofactor.

It localises to the cytoplasm. It carries out the reaction tRNA(Ile) + L-isoleucine + ATP = L-isoleucyl-tRNA(Ile) + AMP + diphosphate. Its function is as follows. Catalyzes the attachment of isoleucine to tRNA(Ile). As IleRS can inadvertently accommodate and process structurally similar amino acids such as valine, to avoid such errors it has two additional distinct tRNA(Ile)-dependent editing activities. One activity is designated as 'pretransfer' editing and involves the hydrolysis of activated Val-AMP. The other activity is designated 'posttransfer' editing and involves deacylation of mischarged Val-tRNA(Ile). This Ehrlichia ruminantium (strain Welgevonden) protein is Isoleucine--tRNA ligase.